A 174-amino-acid chain; its full sequence is Gamma-crystallin C (174 aa).

2 consecutive Beta/gamma crystallin 'Greek key' domains span residues 2–40 (GKIT…RVDS) and 41–83 (GCWM…RLIP). An S-methylcysteine modification is found at C23. A connecting peptide region spans residues 84 to 87 (HTGS). 2 Beta/gamma crystallin 'Greek key' domains span residues 88–128 (HRMR…HVLE) and 129–171 (GCWV…RRVV).

The protein belongs to the beta/gamma-crystallin family.

Crystallins are the dominant structural components of the vertebrate eye lens. The protein is Gamma-crystallin C (Crygc) of Rattus norvegicus (Rat).